A 519-amino-acid chain; its full sequence is Iroquois-class homeodomain protein IRX-4 (519 aa).

A DNA-binding region (homeobox; TALE-type) is located at residues 143 to 204; sequence GTRRKNATRE…NARRRLKKEN (62 aa). Residues 204–298 form a disordered region; the sequence is NKMTWPPRNK…VPAAPDGPVK (95 aa). A compositionally biased stretch (basic and acidic residues) spans 213-222; it reads KCADEKRPYA. Acidic residues-rich tracts occupy residues 223 to 235 and 257 to 267; these read EGEE…EEAR and LSDLDDFDPLE.

The protein belongs to the TALE/IRO homeobox family. Interacts with the vitamin D receptor VDR but doesn't affect its transactivation activity. Predominantly expressed in cardiac ventricles.

It is found in the nucleus. Functionally, likely to be an important mediator of ventricular differentiation during cardiac development. This Homo sapiens (Human) protein is Iroquois-class homeodomain protein IRX-4 (IRX4).